Here is a 273-residue protein sequence, read N- to C-terminus: CUE domain-containing protein 2-A (273 aa).

The disordered stretch occupies residues 92–121; the sequence is GKENVSPKPTAEVSFMTPTSSSTESSKKIE. The 44-residue stretch at 135–178 folds into the CUE domain; it reads DAKNGIDLLLEIFPSCTVSQAQTALSMAKGDLEDAVQIIVDGKV.

It belongs to the CUEDC2 family. Post-translationally, phosphorylated.

It is found in the cytoplasm. It localises to the nucleus. Its function is as follows. May play a role in targeting proteins for ubiquitination and subsequent proteasomal degradation. The protein is CUE domain-containing protein 2-A (cuedc2-a) of Xenopus laevis (African clawed frog).